The primary structure comprises 72 residues: Long neurotoxin OH-5 (72 aa).

5 disulfides stabilise this stretch: C3/C22, C15/C43, C28/C32, C47/C58, and C59/C64.

The protein belongs to the three-finger toxin family. Long-chain subfamily. Type II alpha-neurotoxin sub-subfamily. In terms of tissue distribution, expressed by the venom gland.

Its subcellular location is the secreted. In terms of biological role, binds with high affinity to muscular (alpha-1/CHRNA1) and neuronal (alpha-7/CHRNA7) nicotinic acetylcholine receptor (nAChR) and inhibits acetylcholine from binding to the receptor, thereby impairing neuromuscular and neuronal transmission. In Ophiophagus hannah (King cobra), this protein is Long neurotoxin OH-5.